Consider the following 193-residue polypeptide: dTTP/UTP pyrophosphatase (193 aa).

Residue aspartate 77 is the Proton acceptor of the active site.

Belongs to the Maf family. YhdE subfamily. The cofactor is a divalent metal cation.

Its subcellular location is the cytoplasm. It catalyses the reaction dTTP + H2O = dTMP + diphosphate + H(+). The catalysed reaction is UTP + H2O = UMP + diphosphate + H(+). Its function is as follows. Nucleoside triphosphate pyrophosphatase that hydrolyzes dTTP and UTP. May have a dual role in cell division arrest and in preventing the incorporation of modified nucleotides into cellular nucleic acids. This chain is dTTP/UTP pyrophosphatase, found in Bacteroides fragilis (strain ATCC 25285 / DSM 2151 / CCUG 4856 / JCM 11019 / LMG 10263 / NCTC 9343 / Onslow / VPI 2553 / EN-2).